Here is an 82-residue protein sequence, read N- to C-terminus: uncharacterized protein (82 aa).

A disordered region spans residues 22-82 (LRRSRSSRNG…WPPPCAFTPG (61 aa)). The segment covering 47-58 (HRGEPGHPRMEE) has biased composition (basic and acidic residues). Residues 73 to 82 (WPPPCAFTPG) are compositionally biased toward pro residues.

This is an uncharacterized protein from Homo sapiens (Human).